Consider the following 583-residue polypeptide: Atlastin-2 (583 aa).

Residues 1-44 (MAEGDEAARGQQPHQGLWRRRRTSDPSAAVNHVSSTTSLGENYE) form a disordered region. The tract at residues 1–60 (MAEGDEAARGQQPHQGLWRRRRTSDPSAAVNHVSSTTSLGENYEDDDLVNSDEVMKKPCP) is N-terminal hypervariable region (HVR). The Cytoplasmic portion of the chain corresponds to 1 to 476 (MAEGDEAARG…NIFYAARTPA (476 aa)). Ser24 is subject to Phosphoserine. The 246-residue stretch at 91–336 (DLNIVVVSVA…LVPLLLAPEN (246 aa)) folds into the GB1/RHD3-type G domain. Positions 104, 105, 106, 107, 108, 109, 175, 244, and 245 each coordinate GDP. 6 residues coordinate GTP: Arg104, Lys105, Gly106, Lys107, Ser108, and Phe109. Mg(2+) is bound at residue Ser108. GTP contacts are provided by Arg244 and Asp245. The stretch at 256 to 284 (LEGGKQFLEKRLQVKQNQHEELQNVRKHI) forms a coiled coil. Position 270 is an N6-methyllysine (Lys270). The GDP site is built by Val303 and Asn306. Val303 provides a ligand contact to GTP. Residues 374–465 (MLQATAEANN…YANFIKHNDG (92 aa)) are 3HB (three-helix bundle) domain. Positions 466–474 (KNIFYAART) are linker. A helical transmembrane segment spans residues 477-497 (TLFAVMFAMYIISGLTGFIGL). Over 498–499 (NS) the chain is Lumenal. The chain crosses the membrane as a helical span at residues 500–520 (IAVLCNLVMGLALIFLCTWAY). The Cytoplasmic portion of the chain corresponds to 521–583 (VKYSGEFREI…VSHHARLKTD (63 aa)). The segment at 547–583 (KPLGDNLMEENIRQSVTNSIKAGLTDQVSHHARLKTD) is autoinhibitory domain.

It belongs to the TRAFAC class dynamin-like GTPase superfamily. GB1/RHD3 GTPase family. GB1 subfamily. Monomeric and homodimeric. The homodimer, transiently formed by two molecules on opposing membranes, is the active form mediating ER membrane fusion. Interacts with REEP5 and RTN3; these proteins are involved in endoplasmic reticulum tubular network organization. Interacts with ZFYVE27; both proteins are involved in endoplasmic reticulum tubular network organization. As to expression, expressed in peripheral tissues (at protein level).

It is found in the endoplasmic reticulum membrane. It catalyses the reaction GTP + H2O = GDP + phosphate + H(+). With its alternative C-terminus disrupting the autoinhibitory domain, this brain-specific isoform is probably more active at fusing ER membranes. Atlastin-2 (ATL2) is a membrane-anchored GTPase that mediates the GTP-dependent fusion of endoplasmic reticulum (ER) membranes, maintaining the continuous ER network. It facilitates the formation of three-way junctions where ER tubules intersect. Two atlastin-2 on neighboring ER tubules bind GTP and form loose homodimers through the GB1/RHD3-type G domains and 3HB regions. Upon GTP hydrolysis, the 3HB regions tighten, pulling the membranes together to drive their fusion. After fusion, the homodimer disassembles upon release of inorganic phosphate (Pi). Subsequently, GDP dissociates, resetting the monomers to a conformation ready for a new fusion cycle. The chain is Atlastin-2 from Homo sapiens (Human).